Here is a 415-residue protein sequence, read N- to C-terminus: Transcriptional regulator fogI (415 aa).

Residues 12 to 39 (CNACNESKVRCSQTKPTCARCERNKTTC) constitute a DNA-binding region (zn(2)-C6 fungal-type). The segment at 50 to 153 (DAPPISLSHS…ILSPANLDLP (104 aa)) is disordered. 2 stretches are compositionally biased toward low complexity: residues 80-102 (VHIPNATATANATTTANYTSTTT) and 123-135 (QFFAQQQPHHQQP).

It is found in the nucleus. Transcriptional regulator that postively regulates the expression of the gene cluster that mediates the biosynthesis of flavoglaucin and congeners (including aspergin, dihydroauroglaucin and auroglaucin), prenylated salicylaldehyde derivatives carrying a saturated or an unsaturated C-7 side chain. This chain is Transcriptional regulator fogI, found in Aspergillus ruber (strain CBS 135680).